A 216-amino-acid polypeptide reads, in one-letter code: Vascular endothelial growth factor A (216 aa).

The N-terminal stretch at 1-26 is a signal peptide; that stretch reads MNFLLTWIHWGLAALLYFHNAKVLQA. 3 disulfides stabilise this stretch: Cys52-Cys94, Cys83-Cys128, and Cys87-Cys130. An N-linked (GlcNAc...) asparagine glycan is attached at Asn101. Positions 140-161 are disordered; the sequence is QEKKSKREKGKGQKRKRKRGRY. Basic residues predominate over residues 145–161; sequence KREKGKGQKRKRKRGRY.

This sequence belongs to the PDGF/VEGF growth factor family. In terms of assembly, homodimer; disulfide-linked. Also found as heterodimer with PGF. Interacts to the FLT1/VEGFR1 and KDR/VEGFR2 receptors, heparan sulfate and heparin. As to expression, expressed in venom gland, heart, brain, liver, skeletal muscle and kidney.

It is found in the secreted. Growth factor active in angiogenesis, vasculogenesis and endothelial cell growth. Induces endothelial cell proliferation, promotes cell migration, inhibits apoptosis and induces permeabilization of blood vessels. The polypeptide is Vascular endothelial growth factor A (Protobothrops flavoviridis (Habu)).